A 343-amino-acid polypeptide reads, in one-letter code: 4-hydroxy-2-oxovalerate aldolase 1 (343 aa).

One can recognise a Pyruvate carboxyltransferase domain in the interval 8 to 260 (ITVHDMSLRD…ETGVDVFAIS (253 aa)). 16–17 (RD) is a binding site for substrate. Asp17 is a binding site for Mn(2+). His20 functions as the Proton acceptor in the catalytic mechanism. Substrate contacts are provided by Ser170 and His199. Residues His199 and His201 each contribute to the Mn(2+) site. Residue Tyr290 participates in substrate binding.

Belongs to the 4-hydroxy-2-oxovalerate aldolase family.

The catalysed reaction is (S)-4-hydroxy-2-oxopentanoate = acetaldehyde + pyruvate. The protein is 4-hydroxy-2-oxovalerate aldolase 1 (bphI) of Burkholderia cenocepacia (strain ATCC BAA-245 / DSM 16553 / LMG 16656 / NCTC 13227 / J2315 / CF5610) (Burkholderia cepacia (strain J2315)).